The chain runs to 334 residues: Ribosomal RNA small subunit methyltransferase H (334 aa).

Residues glycine 39 to histidine 41, aspartate 59, phenylalanine 83, aspartate 100, and glutamine 107 each bind S-adenosyl-L-methionine. The tract at residues glutamate 303–proline 334 is disordered.

It belongs to the methyltransferase superfamily. RsmH family.

The protein resides in the cytoplasm. The enzyme catalyses cytidine(1402) in 16S rRNA + S-adenosyl-L-methionine = N(4)-methylcytidine(1402) in 16S rRNA + S-adenosyl-L-homocysteine + H(+). Functionally, specifically methylates the N4 position of cytidine in position 1402 (C1402) of 16S rRNA. The sequence is that of Ribosomal RNA small subunit methyltransferase H from Verminephrobacter eiseniae (strain EF01-2).